Reading from the N-terminus, the 398-residue chain is Lipase member K (398 aa).

A signal peptide spans 1–19; it reads MWWLLATTCCVLLSGPIDG. In terms of domain architecture, AB hydrolase-1 spans 78-377; the sequence is VVYLQHGLIA…HYNHMDFYLG (300 aa). The active-site Nucleophile is Ser-171. Cys-245 and Cys-254 form a disulfide bridge. N-linked (GlcNAc...) asparagine glycosylation is found at Asn-270 and Asn-326. Active-site charge relay system residues include Asp-342 and His-371.

It belongs to the AB hydrolase superfamily. Lipase family.

It is found in the secreted. Its function is as follows. Plays a highly specific role in the last step of keratinocyte differentiation. May have an essential function in lipid metabolism of the most differentiated epidermal layers. The protein is Lipase member K (Lipk) of Mus musculus (Mouse).